The chain runs to 447 residues: MCSTKVPNERTEKMNSGLISTRHQVDPKKELSRILRTDAAVKGIERKANSEKYLTLWPKAVLEALDEAIKENRWQSALKIFNLLRKQHWYEPRCKTYTKLFKVLGNCKQPDQASLLFEVMLSEGLKPTIDVYTSLISVYGKSELLDKAFSTLEYMKSVSDCKPDVFTFTVLISCCCKLGRFDLVKSIVLEMSYLGVGCSTVTYNTIIDGYGKAGMFEEMESVLADMIEDGDSLPDVCTLNSIIGSYGNGRNMRKMESWYSRFQLMGVQPDITTFNILILSFGKAGMYKKMCSVMDFMEKRFFSLTTVTYNIVIETFGKAGRIEKMDDVFRKMKYQGVKPNSITYCSLVNAYSKAGLVVKIDSVLRQIVNSDVVLDTPFFNCIINAYGQAGDLATMKELYIQMEERKCKPDKITFATMIKTYTAHGIFDAVQELEKQMISSGENLDIL.

10 PPR repeats span residues 93–127 (RCKT…GLKP), 128–158 (TIDV…MKSV), 164–198 (DVFT…GVGC), 199–233 (STVT…GDSL), 235–269 (DVCT…GVQP), 270–304 (DITT…FFSL), 305–339 (TTVT…GVKP), 340–374 (NSIT…DVVL), 375–409 (DTPF…KCKP), and 410–444 (DKIT…GENL).

This sequence belongs to the PPR family. P subfamily.

In Arabidopsis thaliana (Mouse-ear cress), this protein is Pentatricopeptide repeat-containing protein At3g53170.